The chain runs to 797 residues: Protocadherin beta-11 (797 aa).

A signal peptide spans 1 to 26; it reads MENGGTRTQQIRQVLLLFVLLGMSQA. At 27-690 the chain is on the extracellular side; the sequence is GSETWSFSVA…AQTDFLTVYL (664 aa). 5 Cadherin domains span residues 35–133, 138–242, 247–347, 352–451, and 456–561; these read VAEE…SPIF, MLLE…SPEF, YEVK…APEI, ITSP…APTF, and YTLF…SPFV. Residues Asn418, Asn436, Asn487, and Asn567 are each glycosylated (N-linked (GlcNAc...) asparagine). The region spanning 568–671 is the Cadherin 6 domain; that stretch reads GSAPCTELVP…LVDGFSQPFL (104 aa). A helical transmembrane segment spans residues 691–711; sequence VVALASVSSLFFFSVLLFVAV. At 712 to 797 the chain is on the cytoplasmic side; it reads RLCRRSRAAS…TFQNSFGFNF (86 aa).

It localises to the cell membrane. In terms of biological role, potential calcium-dependent cell-adhesion protein. May be involved in the establishment and maintenance of specific neuronal connections in the brain. This chain is Protocadherin beta-11 (PCDHB11), found in Pan troglodytes (Chimpanzee).